The chain runs to 164 residues: Phosphopantetheine adenylyltransferase (164 aa).

Ser11 provides a ligand contact to substrate. ATP is bound by residues 11-12 (SF) and His19. Substrate is bound by residues Lys43, Ala76, and Arg90. Residues 91–93 (GLR), Glu101, and 126–132 (YQHISSS) each bind ATP.

Belongs to the bacterial CoaD family. In terms of assembly, homohexamer. The cofactor is Mg(2+).

It localises to the cytoplasm. It carries out the reaction (R)-4'-phosphopantetheine + ATP + H(+) = 3'-dephospho-CoA + diphosphate. It participates in cofactor biosynthesis; coenzyme A biosynthesis; CoA from (R)-pantothenate: step 4/5. Its function is as follows. Reversibly transfers an adenylyl group from ATP to 4'-phosphopantetheine, yielding dephospho-CoA (dPCoA) and pyrophosphate. In Streptococcus gordonii (strain Challis / ATCC 35105 / BCRC 15272 / CH1 / DL1 / V288), this protein is Phosphopantetheine adenylyltransferase.